Here is a 190-residue protein sequence, read N- to C-terminus: Large ribosomal subunit protein bL9 (190 aa).

This sequence belongs to the bacterial ribosomal protein bL9 family.

Its function is as follows. Binds to the 23S rRNA. The protein is Large ribosomal subunit protein bL9 of Rhodobacter capsulatus (strain ATCC BAA-309 / NBRC 16581 / SB1003).